Consider the following 539-residue polypeptide: GMP synthase [glutamine-hydrolyzing] (539 aa).

The region spanning 4-202 is the Glutamine amidotransferase type-1 domain; sequence KILILDFGSQ…VLQIAGAKPD (199 aa). C81 (nucleophile) is an active-site residue. Catalysis depends on residues H176 and E178. The 193-residue stretch at 203–395 folds into the GMPS ATP-PPase domain; the sequence is WIMKNHIEEA…LGLPPEMVYR (193 aa). 230-236 provides a ligand contact to ATP; the sequence is SGGVDSS.

Homodimer.

It carries out the reaction XMP + L-glutamine + ATP + H2O = GMP + L-glutamate + AMP + diphosphate + 2 H(+). Its pathway is purine metabolism; GMP biosynthesis; GMP from XMP (L-Gln route): step 1/1. Its function is as follows. Catalyzes the synthesis of GMP from XMP. The sequence is that of GMP synthase [glutamine-hydrolyzing] from Burkholderia cenocepacia (strain ATCC BAA-245 / DSM 16553 / LMG 16656 / NCTC 13227 / J2315 / CF5610) (Burkholderia cepacia (strain J2315)).